The following is a 542-amino-acid chain: Dihydropyrimidinase (542 aa).

Zn(2+) is bound by residues H62, H64, and K167. K167 carries the post-translational modification N6-carboxylysine. Y172 serves as a coordination point for substrate. Positions 199 and 255 each coordinate Zn(2+). S331 contributes to the substrate binding site. Zn(2+) is bound at residue D358. N392 provides a ligand contact to substrate.

It belongs to the metallo-dependent hydrolases superfamily. Hydantoinase/dihydropyrimidinase family. In terms of assembly, homotetramer. Zn(2+) serves as cofactor. In terms of processing, carboxylation allows a single lysine to coordinate two zinc ions.

It catalyses the reaction 5,6-dihydrouracil + H2O = 3-(carbamoylamino)propanoate + H(+). Functionally, catalyzes the second step of the reductive pyrimidine degradation, the reversible hydrolytic ring opening of dihydropyrimidines. Can catalyze the ring opening of 5,6-dihydrouracil to N-carbamyl-alanine and of 5,6-dihydrothymine to N-carbamyl-amino isobutyrate. The protein is Dihydropyrimidinase (PYD2) of Lachancea kluyveri (strain ATCC 58438 / CBS 3082 / BCRC 21498 / NBRC 1685 / JCM 7257 / NCYC 543 / NRRL Y-12651) (Yeast).